The primary structure comprises 156 residues: 6,7-dimethyl-8-ribityllumazine synthase (156 aa).

5-amino-6-(D-ribitylamino)uracil is bound by residues phenylalanine 22, 57–59, and 81–83; these read AYE and TVI. 86–87 provides a ligand contact to (2S)-2-hydroxy-3-oxobutyl phosphate; sequence GT. The Proton donor role is filled by histidine 89. Phenylalanine 114 lines the 5-amino-6-(D-ribitylamino)uracil pocket. Arginine 128 lines the (2S)-2-hydroxy-3-oxobutyl phosphate pocket.

This sequence belongs to the DMRL synthase family. Forms an icosahedral capsid composed of 60 subunits, arranged as a dodecamer of pentamers.

The enzyme catalyses (2S)-2-hydroxy-3-oxobutyl phosphate + 5-amino-6-(D-ribitylamino)uracil = 6,7-dimethyl-8-(1-D-ribityl)lumazine + phosphate + 2 H2O + H(+). It functions in the pathway cofactor biosynthesis; riboflavin biosynthesis; riboflavin from 2-hydroxy-3-oxobutyl phosphate and 5-amino-6-(D-ribitylamino)uracil: step 1/2. In terms of biological role, catalyzes the formation of 6,7-dimethyl-8-ribityllumazine by condensation of 5-amino-6-(D-ribitylamino)uracil with 3,4-dihydroxy-2-butanone 4-phosphate. This is the penultimate step in the biosynthesis of riboflavin. This is 6,7-dimethyl-8-ribityllumazine synthase from Mannheimia succiniciproducens (strain KCTC 0769BP / MBEL55E).